Consider the following 500-residue polypeptide: Anthranilate synthase component 1 (500 aa).

L-tryptophan contacts are provided by residues Ser-49 and 276-278 (PFM). A chorismate-binding site is contributed by 311-312 (GT). Glu-338 serves as a coordination point for Mg(2+). Chorismate-binding positions include Tyr-426, Arg-446, 460 to 462 (GGG), and Gly-462. Residue Glu-475 coordinates Mg(2+).

The protein belongs to the anthranilate synthase component I family. In terms of assembly, heterotetramer consisting of two non-identical subunits: a beta subunit (TrpG) and a large alpha subunit (TrpE). The cofactor is Mg(2+).

It carries out the reaction chorismate + L-glutamine = anthranilate + pyruvate + L-glutamate + H(+). It functions in the pathway amino-acid biosynthesis; L-tryptophan biosynthesis; L-tryptophan from chorismate: step 1/5. With respect to regulation, feedback inhibited by tryptophan. In terms of biological role, part of a heterotetrameric complex that catalyzes the two-step biosynthesis of anthranilate, an intermediate in the biosynthesis of L-tryptophan. In the first step, the glutamine-binding beta subunit (TrpG) of anthranilate synthase (AS) provides the glutamine amidotransferase activity which generates ammonia as a substrate that, along with chorismate, is used in the second step, catalyzed by the large alpha subunit of AS (TrpE) to produce anthranilate. In the absence of TrpG, TrpE can synthesize anthranilate directly from chorismate and high concentrations of ammonia. This Cereibacter sphaeroides (strain ATCC 17023 / DSM 158 / JCM 6121 / CCUG 31486 / LMG 2827 / NBRC 12203 / NCIMB 8253 / ATH 2.4.1.) (Rhodobacter sphaeroides) protein is Anthranilate synthase component 1 (trpE).